The sequence spans 286 residues: tRNA (guanine-N(1)-)-methyltransferase (286 aa).

S-adenosyl-L-methionine-binding positions include Gly-116 and 140–145 (IGDYVL). Residues 232–286 (DALPPGSLTPHEEALAAEARLHAGRSAETPPPAGAAGSQAEGPPGTSPSDAAVAH) are disordered.

This sequence belongs to the RNA methyltransferase TrmD family. Homodimer.

The protein localises to the cytoplasm. It carries out the reaction guanosine(37) in tRNA + S-adenosyl-L-methionine = N(1)-methylguanosine(37) in tRNA + S-adenosyl-L-homocysteine + H(+). Specifically methylates guanosine-37 in various tRNAs. The chain is tRNA (guanine-N(1)-)-methyltransferase from Acidothermus cellulolyticus (strain ATCC 43068 / DSM 8971 / 11B).